A 220-amino-acid polypeptide reads, in one-letter code: PKHD-type hydroxylase sync_1544 (220 aa).

Residues 79-173 form the Fe2OG dioxygenase domain; it reads KLHRFLISKT…RTVCVGWIES (95 aa). 3 residues coordinate Fe cation: His97, Asp99, and His154. Arg164 provides a ligand contact to 2-oxoglutarate.

Fe(2+) is required as a cofactor. The cofactor is L-ascorbate.

The protein is PKHD-type hydroxylase sync_1544 of Synechococcus sp. (strain CC9311).